We begin with the raw amino-acid sequence, 94 residues long: Large ribosomal subunit protein bL25 (94 aa).

This sequence belongs to the bacterial ribosomal protein bL25 family. As to quaternary structure, part of the 50S ribosomal subunit; part of the 5S rRNA/L5/L18/L25 subcomplex. Contacts the 5S rRNA. Binds to the 5S rRNA independently of L5 and L18.

Its function is as follows. This is one of the proteins that binds to the 5S RNA in the ribosome where it forms part of the central protuberance. The chain is Large ribosomal subunit protein bL25 from Escherichia coli O6:K15:H31 (strain 536 / UPEC).